Here is a 407-residue protein sequence, read N- to C-terminus: Formate-dependent phosphoribosylglycinamide formyltransferase (407 aa).

Residues 28 to 29 (EL) and E88 contribute to the N(1)-(5-phospho-beta-D-ribosyl)glycinamide site. ATP contacts are provided by residues R121, K162, 167–172 (SSGKGQ), 202–205 (EGFI), and E210. One can recognise an ATP-grasp domain in the interval 126–320 (RLAAEELGVA…EFELHAKAIL (195 aa)). Mg(2+)-binding residues include E279 and E291. N(1)-(5-phospho-beta-D-ribosyl)glycinamide contacts are provided by residues D298, K367, and 374–375 (RR).

Belongs to the PurK/PurT family. Homodimer.

The catalysed reaction is N(1)-(5-phospho-beta-D-ribosyl)glycinamide + formate + ATP = N(2)-formyl-N(1)-(5-phospho-beta-D-ribosyl)glycinamide + ADP + phosphate + H(+). Its pathway is purine metabolism; IMP biosynthesis via de novo pathway; N(2)-formyl-N(1)-(5-phospho-D-ribosyl)glycinamide from N(1)-(5-phospho-D-ribosyl)glycinamide (formate route): step 1/1. Its function is as follows. Involved in the de novo purine biosynthesis. Catalyzes the transfer of formate to 5-phospho-ribosyl-glycinamide (GAR), producing 5-phospho-ribosyl-N-formylglycinamide (FGAR). Formate is provided by PurU via hydrolysis of 10-formyl-tetrahydrofolate. The chain is Formate-dependent phosphoribosylglycinamide formyltransferase from Herminiimonas arsenicoxydans.